Consider the following 323-residue polypeptide: Lipoyl synthase (323 aa).

Residues Cys69, Cys74, Cys80, Cys95, Cys99, Cys102, and Ser310 each contribute to the [4Fe-4S] cluster site. One can recognise a Radical SAM core domain in the interval 81–299; it reads WTHGTLTVMI…EAWGYELGFR (219 aa).

This sequence belongs to the radical SAM superfamily. Lipoyl synthase family. [4Fe-4S] cluster serves as cofactor.

Its subcellular location is the cytoplasm. The enzyme catalyses [[Fe-S] cluster scaffold protein carrying a second [4Fe-4S](2+) cluster] + N(6)-octanoyl-L-lysyl-[protein] + 2 oxidized [2Fe-2S]-[ferredoxin] + 2 S-adenosyl-L-methionine + 4 H(+) = [[Fe-S] cluster scaffold protein] + N(6)-[(R)-dihydrolipoyl]-L-lysyl-[protein] + 4 Fe(3+) + 2 hydrogen sulfide + 2 5'-deoxyadenosine + 2 L-methionine + 2 reduced [2Fe-2S]-[ferredoxin]. Its pathway is protein modification; protein lipoylation via endogenous pathway; protein N(6)-(lipoyl)lysine from octanoyl-[acyl-carrier-protein]: step 2/2. Functionally, catalyzes the radical-mediated insertion of two sulfur atoms into the C-6 and C-8 positions of the octanoyl moiety bound to the lipoyl domains of lipoate-dependent enzymes, thereby converting the octanoylated domains into lipoylated derivatives. This chain is Lipoyl synthase, found in Thermus thermophilus (strain ATCC 27634 / DSM 579 / HB8).